The primary structure comprises 351 residues: Protein Maqu_2141 (351 aa).

The protein belongs to the proline racemase family.

Functionally, displays neither proline racemase activity nor trans-4-hydroxy-L-proline (t4LHyp) epimerase activity nor t3LHyp dehydratase activity. The chain is Protein Maqu_2141 from Marinobacter nauticus (strain ATCC 700491 / DSM 11845 / VT8) (Marinobacter aquaeolei).